Consider the following 249-residue polypeptide: Flagellar L-ring protein (249 aa).

The N-terminal stretch at 1–25 is a signal peptide; sequence MSRLRTSHALRTAAALVAVGCLASG. Cys26 carries N-palmitoyl cysteine lipidation. Cys26 carries S-diacylglycerol cysteine lipidation.

The protein belongs to the FlgH family. The basal body constitutes a major portion of the flagellar organelle and consists of four rings (L,P,S, and M) mounted on a central rod.

The protein resides in the cell outer membrane. The protein localises to the bacterial flagellum basal body. In terms of biological role, assembles around the rod to form the L-ring and probably protects the motor/basal body from shearing forces during rotation. The sequence is that of Flagellar L-ring protein from Afipia carboxidovorans (strain ATCC 49405 / DSM 1227 / KCTC 32145 / OM5) (Oligotropha carboxidovorans).